Reading from the N-terminus, the 324-residue chain is Viral cathepsin (324 aa).

Positions 1–18 (MNKIVLYLLIYVGTFSAA) are cleaved as a signal peptide. Residues 19–113 (YDLLKAPSYF…VVLNRPPDKG (95 aa)) constitute a propeptide, activation peptide. 3 disulfide bridges follow: Cys-134–Cys-175, Cys-168–Cys-208, and Cys-263–Cys-311. The active site involves Cys-137. N-linked (GlcNAc...) asparagine; by host glycosylation occurs at Asn-159. Active-site residues include His-270 and Asn-290.

The protein belongs to the peptidase C1 family. In terms of processing, synthesized as an inactive proenzyme and activated by proteolytic removal of the inhibitory propeptide.

The catalysed reaction is Endopeptidase of broad specificity, hydrolyzing substrates of both cathepsin L and cathepsin B.. In terms of biological role, cysteine protease that plays an essential role in host liquefaction to facilitate horizontal transmission of the virus. May participate in the degradation of foreign protein expressed by the baculovirus system. In Choristoneura fumiferana defective polyhedrosis virus (Cfdef), this protein is Viral cathepsin (Vcath).